The following is a 51-amino-acid chain: MARNKPFAKKLRLAKAAKQNRRVPVWVIVKTNRKVITHPKRRHWRRTKLKE.

This sequence belongs to the eukaryotic ribosomal protein eL39 family. As to quaternary structure, part of the 50S ribosomal subunit.

In Thermococcus kodakarensis (strain ATCC BAA-918 / JCM 12380 / KOD1) (Pyrococcus kodakaraensis (strain KOD1)), this protein is Large ribosomal subunit protein eL39.